Here is a 255-residue protein sequence, read N- to C-terminus: Venom allergen-1 (255 aa).

The N-terminal stretch at 1–21 is a signal peptide; sequence MASHVIVKFITAAILIGSCYA. An SCP domain is found at 65–210; sequence LKKHNELRAE…VIKYYLVCNY (146 aa). N-linked (GlcNAc...) asparagine glycosylation is found at Asn-146 and Asn-209.

It belongs to the CRISP family. In terms of assembly, interacts with human LRPPRC; the interaction interrupts association between BECN1 and LRPPRC. Interacts with human CD4. As to quaternary structure, (Microbial infection) Interacts with Zika virus envelope protein E and Zika virus-like particles; the interaction does not affect Zika virus replication in human endothelial cells and keratinocytes. In terms of tissue distribution, saliva (at protein level). Female salivary gland. No or low-level expression in female hemolymph, midgut, Malpighian tubule system and ovary. No or low-level expression in male tissues.

The protein resides in the secreted. The protein localises to the host endosome. It is found in the host mitochondrion. Activates autophagy in human monocytic cells, dendritic cells and macrophages. Promotes activation of human CD4(+) T-cells. Does not affect cytokine expression in human monocytic cells. In terms of biological role, (Microbial infection) Promotes dengue virus type 2 replication in human monocytic cells, dendritic cells and macrophages. Pro-viral properties are linked to BECN1-mediated autophagy activation in the host. Does not directly interact with the purified envelope protein of dengue virus type 2. Functionally, (Microbial infection) Promotes Zika virus replication in human monocytic cells, dendritic cells and macrophages. Facilitates Zika virus transmission from infected mosquitoes to the host in mouse model. Pro-viral properties are linked to BECN1-mediated autophagy activation in the host. Does not affect Zika virus replication in human endothelial cells and keratinocytes. Its function is as follows. (Microbial infection) Promotes Semliki Forest virus replication in human monocytic cells. (Microbial infection) Does not influence Batai virus replication in human monocytic cells. The polypeptide is Venom allergen-1 (Aedes aegypti (Yellowfever mosquito)).